The chain runs to 100 residues: Urease subunit gamma (100 aa).

This sequence belongs to the urease gamma subunit family. In terms of assembly, heterotrimer of UreA (gamma), UreB (beta) and UreC (alpha) subunits. Three heterotrimers associate to form the active enzyme.

The protein resides in the cytoplasm. The catalysed reaction is urea + 2 H2O + H(+) = hydrogencarbonate + 2 NH4(+). It participates in nitrogen metabolism; urea degradation; CO(2) and NH(3) from urea (urease route): step 1/1. The sequence is that of Urease subunit gamma from Klebsiella pneumoniae.